Consider the following 214-residue polypeptide: Large ribosomal subunit protein uL3 (214 aa).

A disordered region spans residues 131-153 (KSQRASHGNSRSHNVPGSIGMAQ). Residues 132-145 (SQRASHGNSRSHNV) are compositionally biased toward polar residues. Q153 is subject to N5-methylglutamine.

Belongs to the universal ribosomal protein uL3 family. Part of the 50S ribosomal subunit. Forms a cluster with proteins L14 and L19. Methylated by PrmB.

Its function is as follows. One of the primary rRNA binding proteins, it binds directly near the 3'-end of the 23S rRNA, where it nucleates assembly of the 50S subunit. In Thiobacillus denitrificans (strain ATCC 25259 / T1), this protein is Large ribosomal subunit protein uL3.